The sequence spans 101 residues: Urease subunit beta (101 aa).

This sequence belongs to the urease beta subunit family. Heterotrimer of UreA (gamma), UreB (beta) and UreC (alpha) subunits. Three heterotrimers associate to form the active enzyme.

The protein resides in the cytoplasm. The enzyme catalyses urea + 2 H2O + H(+) = hydrogencarbonate + 2 NH4(+). It functions in the pathway nitrogen metabolism; urea degradation; CO(2) and NH(3) from urea (urease route): step 1/1. This chain is Urease subunit beta, found in Verminephrobacter eiseniae (strain EF01-2).